The following is a 453-amino-acid chain: Cytochrome P450 monooxygenase CYP2 (453 aa).

A helical transmembrane segment spans residues 13–29; that stretch reads MVITMLHGSSTYSLLAS. A glycan (N-linked (GlcNAc...) asparagine) is linked at Asn-85. Position 397 (Cys-397) interacts with heme.

This sequence belongs to the cytochrome P450 family. It depends on heme as a cofactor.

It is found in the membrane. It participates in secondary metabolite biosynthesis. Cytochrome P450 monooxygenase; part of the gene cluster that mediates the biosynthesis of a tyrosine-derived cytochalasan acting as a fungal signal recognized by resistant rice plants and leads to avirulence in Pi33 resistant rice cultivars. The first step in the pathway is catalyzed by the hybrid PKS-NRPS ACE1, assisted by the enoyl reductase RAP1, that are responsible for fusion of the tyrosine precursor and the polyketide backbone. The polyketide synthase module (PKS) of ACE1 is responsible for the synthesis of the polyketide backbone and the downstream nonribosomal peptide synthetase (NRPS) amidates the carboxyl end of the polyketide with the tyrosine precursor. Because ACE1 lacks a designated enoylreductase (ER) domain, the required activity is provided the enoyl reductase RAP1. Reduction by the hydrolyase ORFZ, followed by dehydration and intra-molecular Diels-Alder cyclization by the Diels-Alderase ORF3 then yield the required isoindolone-fused macrocycle. A number of oxidative steps catalyzed by the tailoring enzymes identified within the cluster, including cytochrome P450 monooxygenases CYP1 to CYP4, the FAD-linked oxidoreductase OXR2 and the short-chain dehydrogenase/reductase OXR1, are further required to afford the final cytochalasans that confer avirulence and which have still to be identified. The monooxygenase CYP1 has been shown to be a site-selective C-18 hydroxylase whereas the function of CYP3 is the site-selective epoxidation of the C-6/C-7 olefin that is present in some intermediate compounds. Finally, SYN2 and RAP2 are not required for avirulence in Pi33 resistant rice cultivars. This Pyricularia oryzae (strain 70-15 / ATCC MYA-4617 / FGSC 8958) (Rice blast fungus) protein is Cytochrome P450 monooxygenase CYP2.